We begin with the raw amino-acid sequence, 303 residues long: Ribosomal protein L11 methyltransferase (303 aa).

Residues T144, G165, D187, and N235 each contribute to the S-adenosyl-L-methionine site.

This sequence belongs to the methyltransferase superfamily. PrmA family.

The protein resides in the cytoplasm. The catalysed reaction is L-lysyl-[protein] + 3 S-adenosyl-L-methionine = N(6),N(6),N(6)-trimethyl-L-lysyl-[protein] + 3 S-adenosyl-L-homocysteine + 3 H(+). Its function is as follows. Methylates ribosomal protein L11. This chain is Ribosomal protein L11 methyltransferase, found in Prochlorococcus marinus (strain MIT 9301).